A 221-amino-acid polypeptide reads, in one-letter code: PKHD-type hydroxylase P9215_13741 (221 aa).

A Fe2OG dioxygenase domain is found at 80-174 (RIHGTMFTKT…RFVVVGWIES (95 aa)). Positions 98, 100, and 155 each coordinate Fe cation. 2-oxoglutarate is bound at residue Arg165.

Fe(2+) serves as cofactor. Requires L-ascorbate as cofactor.

The sequence is that of PKHD-type hydroxylase P9215_13741 from Prochlorococcus marinus (strain MIT 9215).